A 650-amino-acid chain; its full sequence is Rab proteins geranylgeranyltransferase component A 1 (650 aa).

Disordered stretches follow at residues 156–208 and 603–650; these read IPAE…ETPK and PAPP…EPSE. A compositionally biased stretch (basic and acidic residues) spans 177 to 190; that stretch reads ATGKKENSDAKSST. Residues 616–634 show a composition bias toward polar residues; it reads DSSQQEVPESSVTPETNSE.

This sequence belongs to the Rab GDI family. Monomer. Heterotrimer composed of RABGGTA, RABGGTB and CHM; within this trimer, RABGGTA and RABGGTB form the catalytic component B, while CHM (component A) mediates Rab protein binding. Can associate with the Rab GGTase dimer (RGGT or component B) prior to Rab protein binding; the association is stabilized by geranylgeranyl pyrophosphate (GGpp). The CHM:RGGT:Rab complex is destabilized by GGpp. Interacts with RAB1A, RAB1B, RAB7A and RAB27A and mediates their prenylation. Interacts with RAB5A. Interacts with the non-phosphorylated forms of RAB3A, RAB3B, RAB3C, RAB3D, RAB5B, RAB5C RAB8A, RAB8B, RAB10, RAB12, RAB35, and RAB43. In terms of tissue distribution, most abundant in the heart, brain, and spleen. Lower levels seen in the lung, liver, muscle and kidney. Extremely low levels seen in the testis.

The protein resides in the cytoplasm. Its subcellular location is the cytosol. In terms of biological role, substrate-binding subunit of the Rab geranylgeranyltransferase (GGTase) complex. Binds unprenylated Rab proteins and presents the substrate peptide to the catalytic component B composed of RABGGTA and RABGGTB, and remains bound to it after the geranylgeranyl transfer reaction. The component A is thought to be regenerated by transferring its prenylated Rab back to the donor membrane. Besides, a pre-formed complex consisting of CHM and the Rab GGTase dimer (RGGT or component B) can bind to and prenylate Rab proteins; this alternative pathway is proposed to be the predominant pathway for Rab protein geranylgeranylation. In Rattus norvegicus (Rat), this protein is Rab proteins geranylgeranyltransferase component A 1 (Chm).